Here is a 657-residue protein sequence, read N- to C-terminus: Penicillin-binding protein activator LpoA (657 aa).

The signal sequence occupies residues 1–25 (MLSSTFVRSKAGLVPVILAALILAA). Cys-26 is lipidated: N-palmitoyl cysteine. The S-diacylglycerol cysteine moiety is linked to residue Cys-26.

This sequence belongs to the LpoA family. Interacts with PBP1a.

It localises to the cell outer membrane. Its function is as follows. Regulator of peptidoglycan synthesis that is essential for the function of penicillin-binding protein 1A (PBP1a). The chain is Penicillin-binding protein activator LpoA from Yersinia pestis bv. Antiqua (strain Angola).